The primary structure comprises 417 residues: mRNA cap guanine-N(7) methyltransferase (417 aa).

The mRNA cap 0 methyltransferase domain maps to 129 to 412 (SPIIKLRNFN…LYTVFAFKKV (284 aa)). 138–139 (NN) is a binding site for mRNA. S-adenosyl-L-methionine-binding residues include Lys-142, Gly-160, Asp-182, Asp-211, Gln-237, and Tyr-242.

It belongs to the class I-like SAM-binding methyltransferase superfamily. mRNA cap 0 methyltransferase family.

Its subcellular location is the nucleus. The enzyme catalyses a 5'-end (5'-triphosphoguanosine)-ribonucleoside in mRNA + S-adenosyl-L-methionine = a 5'-end (N(7)-methyl 5'-triphosphoguanosine)-ribonucleoside in mRNA + S-adenosyl-L-homocysteine. In terms of biological role, responsible for methylating the 5'-cap structure of mRNAs. The protein is mRNA cap guanine-N(7) methyltransferase (ABD1) of Candida glabrata (strain ATCC 2001 / BCRC 20586 / JCM 3761 / NBRC 0622 / NRRL Y-65 / CBS 138) (Yeast).